Reading from the N-terminus, the 100-residue chain is Aspartyl/glutamyl-tRNA(Asn/Gln) amidotransferase subunit C (100 aa).

The protein belongs to the GatC family. Heterotrimer of A, B and C subunits.

The catalysed reaction is L-glutamyl-tRNA(Gln) + L-glutamine + ATP + H2O = L-glutaminyl-tRNA(Gln) + L-glutamate + ADP + phosphate + H(+). It catalyses the reaction L-aspartyl-tRNA(Asn) + L-glutamine + ATP + H2O = L-asparaginyl-tRNA(Asn) + L-glutamate + ADP + phosphate + 2 H(+). Its function is as follows. Allows the formation of correctly charged Asn-tRNA(Asn) or Gln-tRNA(Gln) through the transamidation of misacylated Asp-tRNA(Asn) or Glu-tRNA(Gln) in organisms which lack either or both of asparaginyl-tRNA or glutaminyl-tRNA synthetases. The reaction takes place in the presence of glutamine and ATP through an activated phospho-Asp-tRNA(Asn) or phospho-Glu-tRNA(Gln). This chain is Aspartyl/glutamyl-tRNA(Asn/Gln) amidotransferase subunit C, found in Novosphingobium aromaticivorans (strain ATCC 700278 / DSM 12444 / CCUG 56034 / CIP 105152 / NBRC 16084 / F199).